Here is a 454-residue protein sequence, read N- to C-terminus: Lamina-associated polypeptide 2, isoforms beta/gamma (454 aa).

The tract at residues 1 to 410 (MPEFLEDPSV…KSEKTKKGRS (410 aa)) is nucleoplasmic. The LEM-like domain maps to 5–48 (LEDPSVLTKDKLKSELVANNVTLPAGEQRKDVYVQLYLQHLTAR). Disordered regions lie at residues 47–117 (ARNR…ELTN) and 149–265 (LREQ…VETS). Residues 49–108 (NRPPLPAGTNSKGPPDFSSDEEREPTPVLGSGAAAAGRSRAAVGRKATKKTDKPRQEDKD) form a linker region. T57 is subject to Phosphothreonine. S59, S66, and S67 each carry phosphoserine. T74 carries the post-translational modification Phosphothreonine. A compositionally biased stretch (low complexity) spans 78 to 93 (GSGAAAAGRSRAAVGR). S79 is modified (phosphoserine). Omega-N-methylarginine occurs at positions 86 and 88. Over residues 97–106 (KKTDKPRQED) the composition is skewed to basic and acidic residues. Positions 107 to 117 (KDDLDVTELTN) are enriched in acidic residues. The LEM domain occupies 109–153 (DLDVTELTNEDLLDQLVKYGVNPGPIVGTTRKLYEKKLLKLREQG). The NAKAP95-binding N stretch occupies residues 138 to 243 (TRKLYEKKLL…TSGSSKGGPL (106 aa)). Residue T154 is modified to Phosphothreonine. Over residues 155 to 178 (ESRSSTPLPTISSSAENTRQNGSN) the composition is skewed to polar residues. S156 and S159 each carry phosphoserine. Phosphothreonine occurs at positions 160 and 164. A phosphoserine mark is found at S166, S168, S177, S180, S184, and S190. Over residues 179-203 (DSDRYSDNEEDSKIELKLEKREPLK) the composition is skewed to basic and acidic residues. K207 is subject to N6-acetyllysine. Position 211 is a phosphothreonine (T211). Polar residues predominate over residues 220–237 (NQSYSQAGITETEWTSGS). 7 positions are modified to phosphoserine: S222, S224, S250, S254, S265, S292, and S306. The tract at residues 299–371 (TGNFKHASPI…SCRRPIKGAA (73 aa)) is binds lamins B. The NAKAP95-binding C stretch occupies residues 300 to 374 (GNFKHASPIL…RPIKGAAGRP (75 aa)). At T312 the chain carries Phosphothreonine. Residue S315 is modified to Phosphoserine. R320 carries the citrulline modification. A phosphoserine mark is found at S362, S378, and S385. K389 is subject to N6-acetyllysine. Residue K401 forms a Glycyl lysine isopeptide (Lys-Gly) (interchain with G-Cter in SUMO2) linkage. Phosphoserine is present on S402. The helical; Signal-anchor for type II membrane protein transmembrane segment at 411–434 (IPVWIKILLFVVVAVFLFLVYQAM) threads the bilayer. Residues 435–454 (ETNQVNPFSNFLHVDPRKSN) lie on the Lumenal side of the membrane.

This sequence belongs to the LEM family. Interacts with LMNB1, LMNB2, BANF1, AKAP8L, GMCL and chromosomes. Isoform Zeta interacts with BANF1/BAF and may sequester it in the cytoplasm. In terms of processing, mitosis-specific phosphorylation specifically abolishes its binding to lamin B and chromosomes. Citrullinated by PADI4. Expressed in many tissues. Most abundant in adult thymus and fetal liver.

It is found in the nucleus inner membrane. It localises to the cytoplasm. In terms of biological role, may help direct the assembly of the nuclear lamina and thereby help maintain the structural organization of the nuclear envelope. Possible receptor for attachment of lamin filaments to the inner nuclear membrane. May be involved in the control of initiation of DNA replication through its interaction with NAKAP95. Functionally, thymopoietin (TP) and Thymopentin (TP5) may play a role in T-cell development and function. TP5 is an immunomodulating pentapeptide. The protein is Lamina-associated polypeptide 2, isoforms beta/gamma (TMPO) of Homo sapiens (Human).